The following is a 264-amino-acid chain: Apolipoprotein A-I (264 aa).

The signal sequence occupies residues 1–18 (MKAVVLALAVLFLTGSQA). 2 repeat units span residues 67-88 (LHLL…EQLG) and 89-110 (PVTH…QEMN). The 10 X approximate tandem repeats stretch occupies residues 67–264 (LHLLDNWDTL…DEASKKLNAQ (198 aa)). Residue Met-109 is modified to Methionine sulfoxide. One copy of the 3; half-length repeat lies at 111-121 (KDLEEVKVKVQ). A run of 5 repeats spans residues 122–143 (PYLD…EKVG), 144–165 (PLGA…EKLT), 166–187 (PLGE…TQLA), 188–207 (PYSD…IRDS), and 208–229 (PSLA…EKAK). A 9; half-length repeat occupies 230 to 240 (PALEDLRQGLM). Residues 241–264 (PVLENLKTTVLAAIDEASKKLNAQ) form repeat 10.

It belongs to the apolipoprotein A1/A4/E family. In terms of assembly, homodimer. Interacts with APOA1BP and CLU. Component of a sperm activating protein complex (SPAP), consisting of APOA1, an immunoglobulin heavy chain, an immunoglobulin light chain and albumin. Interacts with NDRG1. Interacts with SCGB3A2. Interacts with NAXE and YJEFN3. In terms of processing, glycosylated. Palmitoylated. Post-translationally, phosphorylation sites are present in the extracellular medium.

The protein resides in the secreted. In terms of biological role, participates in the reverse transport of cholesterol from tissues to the liver for excretion by promoting cholesterol efflux from tissues and by acting as a cofactor for the lecithin cholesterol acyltransferase (LCAT). As part of the SPAP complex, activates spermatozoa motility. This chain is Apolipoprotein A-I (APOA1), found in Jaculus jaculus (Lesser Egyptian jerboa).